We begin with the raw amino-acid sequence, 292 residues long: Bifunctional protein FolD 1 (292 aa).

165-167 serves as a coordination point for NADP(+); that stretch reads GRS.

This sequence belongs to the tetrahydrofolate dehydrogenase/cyclohydrolase family. As to quaternary structure, homodimer.

It carries out the reaction (6R)-5,10-methylene-5,6,7,8-tetrahydrofolate + NADP(+) = (6R)-5,10-methenyltetrahydrofolate + NADPH. It catalyses the reaction (6R)-5,10-methenyltetrahydrofolate + H2O = (6R)-10-formyltetrahydrofolate + H(+). It participates in one-carbon metabolism; tetrahydrofolate interconversion. In terms of biological role, catalyzes the oxidation of 5,10-methylenetetrahydrofolate to 5,10-methenyltetrahydrofolate and then the hydrolysis of 5,10-methenyltetrahydrofolate to 10-formyltetrahydrofolate. This chain is Bifunctional protein FolD 1, found in Myxococcus xanthus (strain DK1622).